Consider the following 2898-residue polypeptide: Pericentrin (2898 aa).

Positions 1 to 117 (MEDEQEQRRR…QPPPPQTAHS (117 aa)) are disordered. The span at 34-44 (SKKKTAKRKGS) shows a compositional bias: basic residues. The residue at position 44 (Ser-44) is a Phosphoserine. Coiled-coil stretches lie at residues 127–343 (LNNM…IRLL) and 382–434 (AQQQ…DSLE). A disordered region spans residues 429–460 (REDSLESTEISSSCVLPEETSGREGKEPPDPL). Basic and acidic residues predominate over residues 448 to 457 (TSGREGKEPP). 4 coiled-coil regions span residues 468 to 527 (KVQE…LREK), 611 to 696 (CALQ…LETH), 727 to 787 (VADV…SLRM), and 872 to 939 (SQDQ…LRRL). Ser-1022 is modified (phosphoserine). Coiled coils occupy residues 1069-1383 (EREF…QENM), 1429-1482 (NEVV…SLMG), and 1529-1593 (QLLA…AKEA). Ser-1437 carries the post-translational modification Phosphoserine. Disordered stretches follow at residues 1745–1786 (VASR…DDVL), 1815–1880 (TQEK…PLTP), and 1958–1979 (TSPS…GPDI). 2 stretches are compositionally biased toward polar residues: residues 1747 to 1766 (SRDT…SENG) and 1817 to 1834 (EKLT…SGHS). The interaction with CDK5RAP2 stretch occupies residues 1801–1822 (NQDLLVQVEMPDFPTQEKLTSQ). Ser-1828, Ser-1859, Ser-1860, and Ser-1959 each carry phosphoserine. A compositionally biased stretch (basic and acidic residues) spans 1963–1976 (ELARRSDGSRKSDG). Position 1987 is a phosphoserine (Ser-1987). Residues 2046 to 2055 (SESQDPSSAL) are compositionally biased toward polar residues. A disordered region spans residues 2046–2088 (SESQDPSSALNKGEPRDPLDGFPRDSQALSEVTTDKGEKESLE). 2 stretches are compositionally biased toward basic and acidic residues: residues 2058–2068 (GEPRDPLDGFP) and 2078–2088 (TTDKGEKESLE). The residue at position 2128 (Ser-2128) is a Phosphoserine. Coiled-coil stretches lie at residues 2211-2403 (KVEQ…EALQ) and 2429-2590 (HALL…ELSM). Disordered stretches follow at residues 2509 to 2532 (VSGG…QFQE) and 2653 to 2684 (NRQS…QTTS). Residues 2545–2810 (LCAAGLLTSF…SQRQRSPSGP (266 aa)) are interaction with NEK2. Polar residues predominate over residues 2653–2671 (NRQSKSSLKQDGTDLQSSL). A calmodulin-binding region spans residues 2758-2771 (KFRTAVRVVIAVLR). Residues 2787-2898 (ALVHPKSTRH…QKSCHQKIKQ (112 aa)) are disordered. Positions 2792-2802 (KSTRHGHRTSQ) are enriched in basic residues. Residues 2845-2860 (TSTPSSRLERSLTASQ) show a composition bias toward polar residues. Basic and acidic residues predominate over residues 2861-2874 (DPEHSLTEYIHHLE). The residue at position 2865 (Ser-2865) is a Phosphoserine.

As to quaternary structure, interacts with DISC1 and PCM1. Binds calmodulin. Interacts with CEP131. Interacts with CDK5RAP2; the interaction is leading to centrosomal localization of PCNT and CDK5RAP2. Interacts with CHD3. Interacts with CHD4; the interaction regulates centrosome integrity. Interacts with NEK2. Interacts with CCDC13. Interacts with CEP68. Interacts with ATF5; the ATF5:PCNT:polyglutamylated tubulin (PGT) tripartite unites the mother centriole and the pericentriolar material (PCM) in the centrosome. Post-translationally, cleaved during mitotis which leads to removal of CDK5RAP2 from the centrosome and promotes centriole disengagement and subsequent centriole separation. The C-terminal fragment is rapidly degraded following cleavage. In terms of processing, ubiquitinated by TRIM43; leading to proteasomal degradation. As to expression, expressed in heart and lung (at protein level). Expressed in kidney, thymus, liver, brain, muscle, testis, spleen, lung and heart.

It is found in the cytoplasm. The protein localises to the cytoskeleton. Its subcellular location is the microtubule organizing center. It localises to the centrosome. Functionally, integral component of the filamentous matrix of the centrosome involved in the initial establishment of organized microtubule arrays in both mitosis and meiosis. Plays a role, together with DISC1, in the microtubule network formation. Is an integral component of the pericentriolar material (PCM). May play an important role in preventing premature centrosome splitting during interphase by inhibiting NEK2 kinase activity at the centrosome. The sequence is that of Pericentrin (Pcnt) from Mus musculus (Mouse).